The primary structure comprises 345 residues: Papain (345 aa).

Residues 1-18 form the signal peptide; the sequence is MAMIPSISKLLFVAICLF. The propeptide at 19–133 is activation peptide; sequence VYMGLSFGDF…EEVLNDGDVN (115 aa). Intrachain disulfides connect cysteine 155/cysteine 196, cysteine 189/cysteine 228, and cysteine 286/cysteine 333. The active site involves cysteine 158. Cysteine 158 serves as a coordination point for E64. Residue cysteine 158 participates in leupeptin binding. Active-site residues include histidine 292 and asparagine 308.

It belongs to the peptidase C1 family.

It carries out the reaction Hydrolysis of proteins with broad specificity for peptide bonds, but preference for an amino acid bearing a large hydrophobic side chain at the P2 position. Does not accept Val in P1'.. With respect to regulation, repressed by the active-site-directed cysteine protease inhibitor E64 (L-trans-epoxysuccinyl-leucylamide-(4-guanido)-butane) produced by Aspergillus japonicus. Inhibited by the inhibitor of cysteine proteases from Trypanosoma brucei (TbICP, rhodesain) and Colocasia esculenta cv. Kaohsiung no. 1 (CeCPI, tarocystatin). Repressed by leupeptin, a peptidic cysteine, serine and threonine protease inhibitor. Its function is as follows. Cysteine proteinase with a high level of diversity in substrate specificity, an amino acid bearing a large hydrophobic side chain at the P2 position is preferred. This is Papain from Carica papaya (Papaya).